The following is a 264-amino-acid chain: NADH dehydrogenase [ubiquinone] iron-sulfur protein 3, mitochondrial (264 aa).

The N-terminal 36 residues, 1 to 36, are a transit peptide targeting the mitochondrion; that stretch reads MAAAAVARLWWRGILGASALTRGTGRPSVLLLPVRR.

Belongs to the complex I 30 kDa subunit family. In terms of assembly, core subunit of respiratory chain NADH dehydrogenase (Complex I) which is composed of 45 different subunits. Interacts with NDUFAF3. Interacts with RAB5IF. Found in subcomplexes containing subunits NDUFS2, MT-ND1 and NDUFA13.

Its subcellular location is the mitochondrion inner membrane. It carries out the reaction a ubiquinone + NADH + 5 H(+)(in) = a ubiquinol + NAD(+) + 4 H(+)(out). In terms of biological role, core subunit of the mitochondrial membrane respiratory chain NADH dehydrogenase (Complex I) which catalyzes electron transfer from NADH through the respiratory chain, using ubiquinone as an electron acceptor. Essential for the catalytic activity and assembly of complex I. The polypeptide is NADH dehydrogenase [ubiquinone] iron-sulfur protein 3, mitochondrial (NDUFS3) (Pan troglodytes (Chimpanzee)).